We begin with the raw amino-acid sequence, 217 residues long: CASP-like protein UU4 (217 aa).

A compositionally biased stretch (basic and acidic residues) spans 1–11 (MYTGQSDHRPE). Residues 1-21 (MYTGQSDHRPEGVGVNPGSPN) form a disordered region. The Cytoplasmic portion of the chain corresponds to 1–61 (MYTGQSDHRP…VKKNINHMSG (61 aa)). The chain crosses the membrane as a helical span at residues 62 to 82 (LSLGLRVSEFVLSVIAFSLMA). Residues 83–98 (SAEQNGAVYSTFTSYS) are Extracellular-facing. The chain crosses the membrane as a helical span at residues 99 to 119 (FVLAINVLVALYAIGQIILSV). Topologically, residues 120-141 (MPLVSGSAPKKLYLFITFGCDQ) are cytoplasmic. The helical transmembrane segment at 142–162 (LSAFLLMAAGAAGASVAMLIN) threads the bilayer. The Extracellular portion of the chain corresponds to 163 to 187 (RKGVIDDYGSGCIDGKITVFCAHAE). A helical transmembrane segment spans residues 188 to 208 (ASIAFTFLSFFCVMISSYLGV). At 209–217 (YNLAPYLIL) the chain is on the cytoplasmic side.

Belongs to the Casparian strip membrane proteins (CASP) family. In terms of assembly, homodimer and heterodimers.

The protein localises to the cell membrane. The protein is CASP-like protein UU4 of Physcomitrium patens (Spreading-leaved earth moss).